A 378-amino-acid chain; its full sequence is Alkaline elastase YaB (378 aa).

Positions 1–27 (MNKKMGKIVAGTALIISVAFSSSIAQA) are cleaved as a signal peptide. Positions 28-110 (AEEAKEKYLI…IEEDAEVTTM (83 aa)) are excised as a propeptide. Glutamine 111 contributes to the Ca(2+) binding site. The 264-residue stretch at 114 to 377 (PWGINRVQAP…SGLVNAEAAT (264 aa)) folds into the Peptidase S8 domain. Aspartate 141 functions as the Charge relay system in the catalytic mechanism. Aspartate 149 lines the Ca(2+) pocket. Histidine 171 serves as the catalytic Charge relay system. Residues leucine 182, asparagine 184, isoleucine 186, valine 188, alanine 272, tyrosine 274, and alanine 277 each coordinate Ca(2+). The Charge relay system role is filled by serine 324.

The protein belongs to the peptidase S8 family. Ca(2+) is required as a cofactor.

The protein resides in the secreted. In terms of biological role, digests elastin efficiently, has a substrate preference for Ala in P1 position. The sequence is that of Alkaline elastase YaB (ale) from Bacillus sp. (strain YaB).